The primary structure comprises 311 residues: Mediator of RNA polymerase II transcription subunit 27 (311 aa).

S132 carries the phosphoserine modification. Residue K134 is modified to N6-methyllysine.

Belongs to the Mediator complex subunit 27 family. In terms of assembly, component of the Mediator complex, which is composed of MED1, MED4, MED6, MED7, MED8, MED9, MED10, MED11, MED12, MED13, MED13L, MED14, MED15, MED16, MED17, MED18, MED19, MED20, MED21, MED22, MED23, MED24, MED25, MED26, MED27, MED29, MED30, MED31, CCNC, CDK8 and CDC2L6/CDK11. The MED12, MED13, CCNC and CDK8 subunits form a distinct module termed the CDK8 module. Mediator containing the CDK8 module is less active than Mediator lacking this module in supporting transcriptional activation. Individual preparations of the Mediator complex lacking one or more distinct subunits have been variously termed ARC, CRSP, DRIP, PC2, SMCC and TRAP.

Its subcellular location is the nucleus. Its function is as follows. Component of the Mediator complex, a coactivator involved in the regulated transcription of nearly all RNA polymerase II-dependent genes. Mediator functions as a bridge to convey information from gene-specific regulatory proteins to the basal RNA polymerase II transcription machinery. Mediator is recruited to promoters by direct interactions with regulatory proteins and serves as a scaffold for the assembly of a functional preinitiation complex with RNA polymerase II and the general transcription factors. This chain is Mediator of RNA polymerase II transcription subunit 27 (Med27), found in Mus musculus (Mouse).